A 523-amino-acid chain; its full sequence is Putative glucosylceramidase 1 (523 aa).

Positions M1–A23 are cleaved as a signal peptide. N-linked (GlcNAc...) asparagine glycosylation is present at N168. E358 acts as the Nucleophile in catalysis.

This sequence belongs to the glycosyl hydrolase 30 family.

It catalyses the reaction a beta-D-glucosylceramide + H2O = an N-acyl-sphingoid base + D-glucose. The enzyme catalyses a beta-D-glucosyl-(1&lt;-&gt;1')-N-acylsphing-4-enine + H2O = an N-acylsphing-4-enine + D-glucose. It carries out the reaction an N-acyl-1-beta-D-glucosyl-15-methylhexadecasphing-4-enine + H2O = an N-acyl-15-methylhexadecasphing-4-enine + D-glucose. It participates in lipid metabolism; sphingolipid metabolism. Its function is as follows. Glucosylceramidase that catalyzes the hydrolysis of glucosylceramides into free ceramides and glucose. C.elegans contains specific sphingoid bases, which are unique or different in structure compared to the sphingoid bases found in other animals. Two examples of these distinctive compounds are: 15-methylhexadecasphinganine and 15-methylhexadecasphing-4-enine. The sequence is that of Putative glucosylceramidase 1 (gba-1) from Caenorhabditis elegans.